The primary structure comprises 319 residues: Acetyl-coenzyme A carboxylase carboxyl transferase subunit alpha (319 aa).

A CoA carboxyltransferase C-terminal domain is found at 38–292 (ALDKKAADLL…GKAIASMLAG (255 aa)).

The protein belongs to the AccA family. In terms of assembly, acetyl-CoA carboxylase is a heterohexamer composed of biotin carboxyl carrier protein (AccB), biotin carboxylase (AccC) and two subunits each of ACCase subunit alpha (AccA) and ACCase subunit beta (AccD).

It localises to the cytoplasm. The catalysed reaction is N(6)-carboxybiotinyl-L-lysyl-[protein] + acetyl-CoA = N(6)-biotinyl-L-lysyl-[protein] + malonyl-CoA. Its pathway is lipid metabolism; malonyl-CoA biosynthesis; malonyl-CoA from acetyl-CoA: step 1/1. Its function is as follows. Component of the acetyl coenzyme A carboxylase (ACC) complex. First, biotin carboxylase catalyzes the carboxylation of biotin on its carrier protein (BCCP) and then the CO(2) group is transferred by the carboxyltransferase to acetyl-CoA to form malonyl-CoA. The chain is Acetyl-coenzyme A carboxylase carboxyl transferase subunit alpha from Jannaschia sp. (strain CCS1).